Here is a 254-residue protein sequence, read N- to C-terminus: RNA polymerase sigma-D factor (254 aa).

The Polymerase core binding signature appears at 54–67 (DLMSLGMLGLYDAL). The segment at residues 220–239 (LTEIGQVLNLSTSRISQIHS) is a DNA-binding region (H-T-H motif).

As to quaternary structure, monomer. Interacts transiently with the RNAP core.

Its function is as follows. Sigma factors are initiation factors that promote the attachment of RNA polymerase (RNAP) to specific initiation sites and are then released. This alternative sigma factor is required for the transcription of the flagellin and motility genes as well as for wild-type chemotaxis. Associates with the RNAP core during all growth phases with a peak at the transition to stationary phase. This is RNA polymerase sigma-D factor (sigD) from Bacillus subtilis (strain 168).